A 601-amino-acid chain; its full sequence is Putative helicase 7 (601 aa).

Positions 17 to 182 (QSFLMSDKNL…IIDAEIIKTD (166 aa)) constitute a Helicase ATP-binding domain. 30–37 (APTGTGKS) contacts ATP. The DEAH box signature appears at 129–132 (DEIH). In terms of domain architecture, Helicase C-terminal spans 208-375 (LKEDFIKKMV…VLEDFLLALI (168 aa)).

The protein is Putative helicase 7 (SIFV0007) of Saccharolobus islandicus (Sulfolobus islandicus).